Consider the following 321-residue polypeptide: UDP-3-O-acylglucosamine N-acyltransferase (321 aa).

Catalysis depends on histidine 231, which acts as the Proton acceptor.

The protein belongs to the transferase hexapeptide repeat family. LpxD subfamily. In terms of assembly, homotrimer.

The catalysed reaction is a UDP-3-O-[(3R)-3-hydroxyacyl]-alpha-D-glucosamine + a (3R)-hydroxyacyl-[ACP] = a UDP-2-N,3-O-bis[(3R)-3-hydroxyacyl]-alpha-D-glucosamine + holo-[ACP] + H(+). It participates in bacterial outer membrane biogenesis; LPS lipid A biosynthesis. Catalyzes the N-acylation of UDP-3-O-acylglucosamine using 3-hydroxyacyl-ACP as the acyl donor. Is involved in the biosynthesis of lipid A, a phosphorylated glycolipid that anchors the lipopolysaccharide to the outer membrane of the cell. The polypeptide is UDP-3-O-acylglucosamine N-acyltransferase (Campylobacter jejuni subsp. jejuni serotype O:2 (strain ATCC 700819 / NCTC 11168)).